Reading from the N-terminus, the 127-residue chain is ATP synthase epsilon chain (127 aa).

Belongs to the ATPase epsilon chain family. In terms of assembly, F-type ATPases have 2 components, CF(1) - the catalytic core - and CF(0) - the membrane proton channel. CF(1) has five subunits: alpha(3), beta(3), gamma(1), delta(1), epsilon(1). CF(0) has three main subunits: a, b and c.

The protein resides in the cell inner membrane. Functionally, produces ATP from ADP in the presence of a proton gradient across the membrane. In Leptospira interrogans serogroup Icterohaemorrhagiae serovar copenhageni (strain Fiocruz L1-130), this protein is ATP synthase epsilon chain.